The chain runs to 392 residues: Formate-dependent phosphoribosylglycinamide formyltransferase (392 aa).

N(1)-(5-phospho-beta-D-ribosyl)glycinamide contacts are provided by residues 22–23 and glutamate 82; that span reads EL. ATP is bound by residues arginine 114, lysine 155, 160 to 165, 195 to 198, and glutamate 203; these read SSGKGQ and EGVV. Residues 119-308 enclose the ATP-grasp domain; it reads RLAAEELQLP…EFALHVRAFL (190 aa). Mg(2+) is bound by residues glutamate 267 and glutamate 279. N(1)-(5-phospho-beta-D-ribosyl)glycinamide-binding positions include aspartate 286, lysine 355, and 362–363; that span reads RR.

The protein belongs to the PurK/PurT family. As to quaternary structure, homodimer.

The enzyme catalyses N(1)-(5-phospho-beta-D-ribosyl)glycinamide + formate + ATP = N(2)-formyl-N(1)-(5-phospho-beta-D-ribosyl)glycinamide + ADP + phosphate + H(+). It participates in purine metabolism; IMP biosynthesis via de novo pathway; N(2)-formyl-N(1)-(5-phospho-D-ribosyl)glycinamide from N(1)-(5-phospho-D-ribosyl)glycinamide (formate route): step 1/1. Its function is as follows. Involved in the de novo purine biosynthesis. Catalyzes the transfer of formate to 5-phospho-ribosyl-glycinamide (GAR), producing 5-phospho-ribosyl-N-formylglycinamide (FGAR). Formate is provided by PurU via hydrolysis of 10-formyl-tetrahydrofolate. This is Formate-dependent phosphoribosylglycinamide formyltransferase from Klebsiella pneumoniae (strain 342).